We begin with the raw amino-acid sequence, 518 residues long: Bifunctional purine biosynthesis protein PurH (518 aa).

The MGS-like domain maps to 1–144; sequence MSKRALISVS…KNHAAVTVVC (144 aa).

The protein belongs to the PurH family.

It catalyses the reaction (6R)-10-formyltetrahydrofolate + 5-amino-1-(5-phospho-beta-D-ribosyl)imidazole-4-carboxamide = 5-formamido-1-(5-phospho-D-ribosyl)imidazole-4-carboxamide + (6S)-5,6,7,8-tetrahydrofolate. The enzyme catalyses IMP + H2O = 5-formamido-1-(5-phospho-D-ribosyl)imidazole-4-carboxamide. It functions in the pathway purine metabolism; IMP biosynthesis via de novo pathway; 5-formamido-1-(5-phospho-D-ribosyl)imidazole-4-carboxamide from 5-amino-1-(5-phospho-D-ribosyl)imidazole-4-carboxamide (10-formyl THF route): step 1/1. Its pathway is purine metabolism; IMP biosynthesis via de novo pathway; IMP from 5-formamido-1-(5-phospho-D-ribosyl)imidazole-4-carboxamide: step 1/1. The polypeptide is Bifunctional purine biosynthesis protein PurH (Lactococcus lactis subsp. cremoris (strain SK11)).